A 112-amino-acid polypeptide reads, in one-letter code: Integration host factor subunit alpha (112 aa).

The protein belongs to the bacterial histone-like protein family. Heterodimer of an alpha and a beta chain.

Its function is as follows. This protein is one of the two subunits of integration host factor, a specific DNA-binding protein that functions in genetic recombination as well as in transcriptional and translational control. This Sinorhizobium medicae (strain WSM419) (Ensifer medicae) protein is Integration host factor subunit alpha.